Here is a 58-residue protein sequence, read N- to C-terminus: Bestoxin (58 aa).

Residues valine 3 to valine 58 form the LCN-type CS-alpha/beta domain. 3 disulfides stabilise this stretch: cysteine 18–cysteine 41, cysteine 27–cysteine 46, and cysteine 31–cysteine 48.

As to expression, expressed by the venom gland.

The protein localises to the secreted. In terms of biological role, beta toxins bind voltage-independently at site-4 of sodium channels (Nav) and shift the voltage of activation toward more negative potentials thereby affecting sodium channel activation and promoting spontaneous and repetitive firing. In mice, causes intense writhing. The sequence is that of Bestoxin from Parabuthus transvaalicus (Transvaal thick-tailed scorpion).